Here is a 157-residue protein sequence, read N- to C-terminus: 2-C-methyl-D-erythritol 2,4-cyclodiphosphate synthase (157 aa).

A divalent metal cation-binding residues include aspartate 8 and histidine 10. 4-CDP-2-C-methyl-D-erythritol 2-phosphate contacts are provided by residues 8–10 and 34–35; these read DVH and HS. Residue histidine 42 coordinates a divalent metal cation. Residues 56 to 58, 61 to 65, 132 to 135, and phenylalanine 139 each bind 4-CDP-2-C-methyl-D-erythritol 2-phosphate; these read DIG, FPDTD, and TTEE.

This sequence belongs to the IspF family. Homotrimer. A divalent metal cation is required as a cofactor.

The catalysed reaction is 4-CDP-2-C-methyl-D-erythritol 2-phosphate = 2-C-methyl-D-erythritol 2,4-cyclic diphosphate + CMP. It functions in the pathway isoprenoid biosynthesis; isopentenyl diphosphate biosynthesis via DXP pathway; isopentenyl diphosphate from 1-deoxy-D-xylulose 5-phosphate: step 4/6. Its function is as follows. Involved in the biosynthesis of isopentenyl diphosphate (IPP) and dimethylallyl diphosphate (DMAPP), two major building blocks of isoprenoid compounds. Catalyzes the conversion of 4-diphosphocytidyl-2-C-methyl-D-erythritol 2-phosphate (CDP-ME2P) to 2-C-methyl-D-erythritol 2,4-cyclodiphosphate (ME-CPP) with a corresponding release of cytidine 5-monophosphate (CMP). The protein is 2-C-methyl-D-erythritol 2,4-cyclodiphosphate synthase of Clostridium botulinum (strain Alaska E43 / Type E3).